The following is a 293-amino-acid chain: MGQKIHPTGFRLAVSRNWASRWYANNRDFAGMLAEDIKVREYLKAKLKNAAVSRILIERPAKNARITIYSARPGVVIGKKGEDIENLKKELASRLGVPVAVNIEEVRKPEIDAKLIADSITQQLEKRIMFRRAMKRAMQNAMRLGAQGIKIMSSGRLNGIEIARTEWYREGRVPLHTLRADIDYGTSEAFTTYGVIGLKVWVYKGDTLGRNDLPAVETPRPEEERRPRGPRRDGRPGGDRAGAGRGPRRPMGGNAAPADGSDKPAGAGGTDATAVKRVRKVDAPATAADGKGE.

Positions 39–107 (VREYLKAKLK…PVAVNIEEVR (69 aa)) constitute a KH type-2 domain. The disordered stretch occupies residues 210–293 (RNDLPAVETP…PATAADGKGE (84 aa)). Residues 219-238 (PRPEEERRPRGPRRDGRPGG) show a composition bias toward basic and acidic residues.

Belongs to the universal ribosomal protein uS3 family. Part of the 30S ribosomal subunit. Forms a tight complex with proteins S10 and S14.

In terms of biological role, binds the lower part of the 30S subunit head. Binds mRNA in the 70S ribosome, positioning it for translation. This chain is Small ribosomal subunit protein uS3, found in Paracidovorax citrulli (strain AAC00-1) (Acidovorax citrulli).